The following is a 444-amino-acid chain: Homocysteine/cysteine synthase (444 aa).

Ser44 carries the post-translational modification Phosphoserine. A Glycyl lysine isopeptide (Lys-Gly) (interchain with G-Cter in ubiquitin) cross-link involves residue Lys160. Lys209 carries the N6-(pyridoxal phosphate)lysine modification.

It belongs to the trans-sulfuration enzymes family. In terms of assembly, homotetramer. Requires pyridoxal 5'-phosphate as cofactor.

It localises to the cytoplasm. The enzyme catalyses O-acetyl-L-homoserine + methanethiol = L-methionine + acetate + H(+). It catalyses the reaction O-acetyl-L-homoserine + hydrogen sulfide = L-homocysteine + acetate. It carries out the reaction O-acetyl-L-serine + hydrogen sulfide = L-cysteine + acetate. It participates in amino-acid biosynthesis; L-methionine biosynthesis via de novo pathway; L-homocysteine from O-acetyl-L-homoserine. Catalyzes the conversion of O-acetyl-L-homoserine (OAH) into homocysteine in the methionine biosynthesis pathway. Required to efficiently reduce toxic levels of hydrogen sulfide generated when the sulfate assimilation pathway (SAP) is active. Also catalyzes the conversion of O-acetylserine (OAS) into cysteine, the last step in the cysteine biosynthesis pathway. However, it seems that in S.cerevisiae cysteine biosynthesis occurs exclusively through the cystathionine pathway and not via direct incorporation of sulfur into OAS. It therefore has no metabolic role in cysteine biosynthesis and may only have a regulatory role controlling OAS levels. In Saccharomyces cerevisiae (strain ATCC 204508 / S288c) (Baker's yeast), this protein is Homocysteine/cysteine synthase.